We begin with the raw amino-acid sequence, 429 residues long: Ribosomal RNA small subunit methyltransferase B (429 aa).

S-adenosyl-L-methionine contacts are provided by residues 254–260 (CAAPGGK), Asp-277, Asp-303, and Asp-322. Residue Cys-375 is the Nucleophile of the active site. The disordered stretch occupies residues 397–419 (ALSETGTPDQPGQQNLPGGEEGD). Polar residues predominate over residues 400–412 (ETGTPDQPGQQNL).

This sequence belongs to the class I-like SAM-binding methyltransferase superfamily. RsmB/NOP family.

The protein localises to the cytoplasm. It carries out the reaction cytidine(967) in 16S rRNA + S-adenosyl-L-methionine = 5-methylcytidine(967) in 16S rRNA + S-adenosyl-L-homocysteine + H(+). Functionally, specifically methylates the cytosine at position 967 (m5C967) of 16S rRNA. This is Ribosomal RNA small subunit methyltransferase B from Salmonella agona (strain SL483).